The chain runs to 335 residues: Putative serine/threonine-protein kinase 040L (335 aa).

A Protein kinase domain is found at 33–329 (YYYQEFHDEG…DRLTELHHHL (297 aa)). ATP is bound by residues 39–47 (HDEGGYGSI) and K62. Residue D196 is the Proton acceptor of the active site.

Belongs to the protein kinase superfamily. Ser/Thr protein kinase family.

The protein is Putative serine/threonine-protein kinase 040L of Invertebrate iridescent virus 3 (IIV-3).